Consider the following 656-residue polypeptide: MSNSQSIKIKKPRSNENFASGSYSSRRSQQIHRLSHSPMAEGFHKPKLNISPSESNLPNNVAENTTDTPVNYGSIRDENHNSRKGKDVTLNSDEAHSENVPSTSEDPDVVRRHLGGQAADDDNFSSLQLQGGDMHRQVYRWQQEVDQNKQIRRGRSRSFSAKVSDPNLHLRSVQDMKQAGGMRRDFLRNRASSISMSSNAHGNPNFLNRNFIEFLSVYGHFAGEELSEEDEDEDTDDFAMPRDVNPSLIHSTVPSEQEPLISRHGRYKLQTPGNASNGKAVLLLLKSFVGTGVLFLPKAFKLGGLVFSSATLLIVGVLSHICFLLLIQTRMKVPGSFGDIGGTLYGPHMRFAILASIVVSQIGFSSAYISFVASTLQACVKVISTTHREYHLAVFIFIQFLVFVPLSLVRKISKLSATALIADVFILLGILYLYFWDVITLATKGIADVAMFNKTDFSLFIGVAIFTYEGICLILPIQEQMAKPKNLPKLLTGVMAAISLLFISIGLLSYAAFGSKVKTVVILNMPESTFTVIIQFLYAIAILLSTPLQLFPAIAIIEQGIFTRSGKRNRKIKWRKNYLRVLIVILAILISWAGSSRLDLFVSMVGSVCCIPLIYMYPPMLHYKACANNWILRTLDIFMFTIGAFAMAFTTYMTFF.

The disordered stretch occupies residues Met1–Val109. The segment covering Asn15–Ser28 has biased composition (polar residues). Phosphoserine occurs at positions 37 and 53. Residues Ile50–Asn71 are compositionally biased toward polar residues. A compositionally biased stretch (basic and acidic residues) spans Ile75–Ser97. At Ser172 the chain carries Phosphoserine. 11 helical membrane passes run Ala280 to Phe300, Phe307 to Ile327, Phe351 to Phe371, Glu389 to Val409, Ala419 to Ile439, Phe457 to Ile477, Val494 to Gly514, Leu537 to Ile557, Tyr578 to Leu598, Phe601 to Leu621, and Asp636 to Phe656.

It belongs to the amino acid/polyamine transporter 2 family.

Its subcellular location is the endoplasmic reticulum membrane. It localises to the vacuole membrane. Involved in amino acid efflux from the vacuole to the cytoplasm. Capable of transporting large neutral amino acids including tyrosine, glutamine, asparagine, isoleucine and leucine. Required for spore formation. The protein is Vacuolar amino acid transporter 3 (avt3) of Schizosaccharomyces pombe (strain 972 / ATCC 24843) (Fission yeast).